Here is a 78-residue protein sequence, read N- to C-terminus: Small ribosomal subunit protein bS18 (78 aa).

It belongs to the bacterial ribosomal protein bS18 family. Part of the 30S ribosomal subunit. Forms a tight heterodimer with protein bS6.

Binds as a heterodimer with protein bS6 to the central domain of the 16S rRNA, where it helps stabilize the platform of the 30S subunit. This Levilactobacillus brevis (strain ATCC 367 / BCRC 12310 / CIP 105137 / JCM 1170 / LMG 11437 / NCIMB 947 / NCTC 947) (Lactobacillus brevis) protein is Small ribosomal subunit protein bS18.